Here is a 60-residue protein sequence, read N- to C-terminus: Regulatory protein DegR (60 aa).

In terms of biological role, stabilizes the phosphorylated form of DegU, leading to enhanced production of levansucrase, alkaline protease, and neutral protease. The chain is Regulatory protein DegR (degR) from Bacillus subtilis subsp. natto.